The primary structure comprises 188 residues: dCTP deaminase (188 aa).

Residues 111–116 (KSTYAR), 135–137 (TLE), Gln-156, Tyr-170, and Gln-180 each bind dCTP. Glu-137 acts as the Proton donor/acceptor in catalysis.

Belongs to the dCTP deaminase family. As to quaternary structure, homotrimer.

It carries out the reaction dCTP + H2O + H(+) = dUTP + NH4(+). It functions in the pathway pyrimidine metabolism; dUMP biosynthesis; dUMP from dCTP (dUTP route): step 1/2. Its function is as follows. Catalyzes the deamination of dCTP to dUTP. This is dCTP deaminase from Pseudomonas aeruginosa (strain UCBPP-PA14).